Here is a 2463-residue protein sequence, read N- to C-terminus: Protein TIC 214 (2463 aa).

6 helical membrane passes run valine 18–leucine 38, phenylalanine 60–leucine 80, isoleucine 86–tryptophan 106, leucine 127–methionine 147, phenylalanine 170–tryptophan 190, and leucine 297–tyrosine 317. A coiled-coil region spans residues glutamine 326 to lysine 441. 5 disordered regions span residues alanine 792–asparagine 841, serine 1230–lysine 1249, serine 1393–phenylalanine 1417, glutamate 2116–lysine 2136, and lysine 2162–glutamine 2187. Over residues proline 794–lysine 830 the composition is skewed to basic residues. Basic and acidic residues-rich tracts occupy residues lysine 832–asparagine 841, isoleucine 1231–lysine 1249, and glutamate 1397–phenylalanine 1417. Residues tryptophan 2049 to lysine 2192 are a coiled coil. Positions lysine 2124–lysine 2136 are enriched in basic residues.

Belongs to the TIC214 family. As to quaternary structure, part of the Tic complex.

It localises to the plastid. The protein localises to the chloroplast inner membrane. In terms of biological role, involved in protein precursor import into chloroplasts. May be part of an intermediate translocation complex acting as a protein-conducting channel at the inner envelope. In Oenothera elata subsp. hookeri (Hooker's evening primrose), this protein is Protein TIC 214.